The sequence spans 145 residues: Cystatin-like 1 (145 aa).

Residues 1–19 (MGIGCWRNPLLLLIALVLS) form the signal peptide. One can recognise a Cystatin domain in the interval 37 to 115 (SKKNMNSTLN…KKLRKSLICE (79 aa)). Asn42 carries N-linked (GlcNAc...) asparagine glycosylation. 2 cysteine pairs are disulfide-bonded: Cys91-Cys101 and Cys114-Cys134.

This sequence belongs to the cystatin family.

It is found in the secreted. This is Cystatin-like 1 (CSTL1) from Homo sapiens (Human).